Here is a 159-residue protein sequence, read N- to C-terminus: NADH-quinone oxidoreductase subunit B (159 aa).

C37, C38, C102, and C132 together coordinate [4Fe-4S] cluster.

Belongs to the complex I 20 kDa subunit family. As to quaternary structure, NDH-1 is composed of 14 different subunits. Subunits NuoB, C, D, E, F, and G constitute the peripheral sector of the complex. The cofactor is [4Fe-4S] cluster.

The protein resides in the cell inner membrane. It carries out the reaction a quinone + NADH + 5 H(+)(in) = a quinol + NAD(+) + 4 H(+)(out). In terms of biological role, NDH-1 shuttles electrons from NADH, via FMN and iron-sulfur (Fe-S) centers, to quinones in the respiratory chain. Couples the redox reaction to proton translocation (for every two electrons transferred, four hydrogen ions are translocated across the cytoplasmic membrane), and thus conserves the redox energy in a proton gradient. The sequence is that of NADH-quinone oxidoreductase subunit B from Polaromonas naphthalenivorans (strain CJ2).